The primary structure comprises 159 residues: ATP synthase subunit b', chloroplastic (159 aa).

The chain crosses the membrane as a helical span at residues 30–47 (LMALQFLALTIILNLIYY).

This sequence belongs to the ATPase B chain family. In terms of assembly, F-type ATPases have 2 components, F(1) - the catalytic core - and F(0) - the membrane proton channel. F(1) has five subunits: alpha(3), beta(3), gamma(1), delta(1), epsilon(1). F(0) has four main subunits: a(1), b(1), b'(1) and c(10-14). The alpha and beta chains form an alternating ring which encloses part of the gamma chain. F(1) is attached to F(0) by a central stalk formed by the gamma and epsilon chains, while a peripheral stalk is formed by the delta, b and b' chains.

The protein localises to the plastid. It localises to the chloroplast thylakoid membrane. Its function is as follows. F(1)F(0) ATP synthase produces ATP from ADP in the presence of a proton or sodium gradient. F-type ATPases consist of two structural domains, F(1) containing the extramembraneous catalytic core and F(0) containing the membrane proton channel, linked together by a central stalk and a peripheral stalk. During catalysis, ATP synthesis in the catalytic domain of F(1) is coupled via a rotary mechanism of the central stalk subunits to proton translocation. In terms of biological role, component of the F(0) channel, it forms part of the peripheral stalk, linking F(1) to F(0). The b'-subunit is a diverged and duplicated form of b found in plants and photosynthetic bacteria. In Antithamnion sp. (Red alga), this protein is ATP synthase subunit b', chloroplastic.